The sequence spans 198 residues: Superoxide dismutase [Fe] (198 aa).

Fe(3+) contacts are provided by H27, H74, D157, and H161.

The protein belongs to the iron/manganese superoxide dismutase family. Homodimer. The cofactor is Fe(3+).

The enzyme catalyses 2 superoxide + 2 H(+) = H2O2 + O2. Destroys superoxide anion radicals which are normally produced within the cells and which are toxic to biological systems. The sequence is that of Superoxide dismutase [Fe] (sodB) from Pseudomonas putida (Arthrobacter siderocapsulatus).